The following is a 493-amino-acid chain: Neisserial heparin binding antigen (493 aa).

The first 22 residues, 1–22 (MKEMMMFKRSVIAMACIFALSA), serve as a signal peptide directing secretion. Cys23 carries N-palmitoyl cysteine lipidation. Cys23 carries the S-diacylglycerol cysteine lipid modification. Positions 27–206 (GGGSPDVKSA…NPAPANGGSN (180 aa)) are disordered. The segment covering 48-58 (SEKETEAKEDA) has biased composition (basic and acidic residues). The segment covering 59–75 (PQAGSQGQGAPSAQGSQ) has biased composition (low complexity). Composition is skewed to polar residues over residues 106 to 123 (DMPQ…NHTP) and 132 to 147 (MENQ…QPAN). A compositionally biased stretch (low complexity) spans 165–188 (AGGQNAGNTAAQGANQAGNNQAAG). The Arg-rich motif motif lies at 301–311 (RFRRSARSRRS).

It belongs to the NHBA family. The C-terminal beta-barrel forms a monomer. In terms of processing, cleaved in vivo by the Neisserial phase-variable autotransporter/serine protease NalP to give 2 fragments. The N-terminus remains in the cell outer membrane while the C-terminus (beginning on Ser-298) is soluble; this soluble fragment is called C2. Cleaved in vitro by human lactoferrin (LTF, between Arg-310 and Ser-311), this fragment is called C1. Recombinant and cell surface protein is cleaved by human saliva kallikrein (KLK1) between Ser-308 and Arg-309; in saliva kallikrein is more active on NHBA than lactoferrin. Human plasma kallikrein (KLKB1) cleaves in a similar manner to KLK1.

Its subcellular location is the cell outer membrane. In terms of biological role, a major human immunogenic protein detected in patients recovering from meningitidis, where it induces bactericidal antibodies. Binds human cells, heparin and heparan sulfate proteoglycan in vitro via the Arg-rich motif. Heparin-binding to this protein protects bacteria against killing by bactericidal antibodies (serum killing). The bacteria binds a number of human extracellular sialyated and/or sulfated glycans via this protein, including chondroitin sulfate, heparin and ganglioside GT3. Whole protein binds DNA. Its function is as follows. Plays a role in extracellular-DNA (eDNA) mediated biofilm formation. In some strains (including cc32 strain H44/76 but not cc11 strain B16B6) eDNA stimulates biofilm formation. When NHBA is not processed by NalP, biofilm formation increases. This is probably because the number of positively charged, NHBA- and IgA-derived DNA-binding peptides on the cell surface rises, resulting in increased DNA-binding peptides and increased biofilm formation. This Neisseria meningitidis serogroup B / serotype 15 (strain H44/76) protein is Neisserial heparin binding antigen.